Reading from the N-terminus, the 547-residue chain is Glucose-6-phosphate isomerase (547 aa).

The active-site Proton donor is the glutamate 351. Residues histidine 382 and lysine 509 contribute to the active site.

The protein belongs to the GPI family.

Its subcellular location is the cytoplasm. It carries out the reaction alpha-D-glucose 6-phosphate = beta-D-fructose 6-phosphate. Its pathway is carbohydrate biosynthesis; gluconeogenesis. It participates in carbohydrate degradation; glycolysis; D-glyceraldehyde 3-phosphate and glycerone phosphate from D-glucose: step 2/4. Catalyzes the reversible isomerization of glucose-6-phosphate to fructose-6-phosphate. In Coxiella burnetii (strain Dugway 5J108-111), this protein is Glucose-6-phosphate isomerase.